The primary structure comprises 265 residues: Phosphonoacetaldehyde hydrolase (265 aa).

The Nucleophile role is filled by Asp10. Residues Asp10 and Ala12 each contribute to the Mg(2+) site. The Schiff-base intermediate with substrate role is filled by Lys51. Asp184 serves as a coordination point for Mg(2+).

This sequence belongs to the HAD-like hydrolase superfamily. PhnX family. Homodimer. The cofactor is Mg(2+).

The catalysed reaction is phosphonoacetaldehyde + H2O = acetaldehyde + phosphate + H(+). In terms of biological role, involved in phosphonate degradation. The protein is Phosphonoacetaldehyde hydrolase of Latilactobacillus sakei subsp. sakei (strain 23K) (Lactobacillus sakei subsp. sakei).